We begin with the raw amino-acid sequence, 284 residues long: uncharacterized protein (284 aa).

This sequence belongs to the methyltransferase superfamily.

The protein localises to the cytoplasm. It localises to the nucleus. Its function is as follows. Probable methyltransferase. This is an uncharacterized protein from Schizosaccharomyces pombe (strain 972 / ATCC 24843) (Fission yeast).